An 86-amino-acid chain; its full sequence is Neuropeptide-like 3 (86 aa).

An N-terminal signal peptide occupies residues 1 to 16 (MFKLCVFVALLSLAAA). Propeptides lie at residues 17–50 (APAP…VAPQ) and 63–75 (AITQ…LLIK). Ile-85 carries the isoleucine amide modification.

Its subcellular location is the secreted. In Drosophila yakuba (Fruit fly), this protein is Neuropeptide-like 3 (Nplp3).